The chain runs to 329 residues: Ephrin-B1 (329 aa).

A signal peptide spans 1–20; sequence MEGLRRLLGLLLVLYRLCSA. Residues 21 to 226 are Extracellular-facing; it reads LGKNLEPVTW…FFNSKIAVFA (206 aa). The 135-residue stretch at 23–157 folds into the Ephrin RBD domain; the sequence is KNLEPVTWNS…TRSMKIIMKV (135 aa). Intrachain disulfides connect cysteine 57-cysteine 94 and cysteine 82-cysteine 146. The N-linked (GlcNAc...) asparagine glycan is linked to asparagine 132. The interval 163–192 is disordered; that stretch reads AVPPEQLTTTRPSKEADNTGKIATFGPWNG. Asparagine 203 carries N-linked (GlcNAc...) asparagine glycosylation. A helical membrane pass occupies residues 227–247; the sequence is AIGAGCVIFILIIIFLVVLLI. The Cytoplasmic segment spans residues 248-329; sequence KIRKRHRKHT…QSPANIYYKV (82 aa). The short motif at 327–329 is the PDZ-binding element; the sequence is YKV.

The protein belongs to the ephrin family. As to quaternary structure, interacts with TLE4 through the PDZ-binding motif. Inducible phosphorylation of tyrosine residues in the cytoplasmic domain. Tyrosine phosphorylation inhibits TLE4-binding. In terms of tissue distribution, expressed at low levels in most tissues with highest levels in the kidney, oocytes, ovary and testis.

The protein localises to the membrane. Its function is as follows. Cell surface transmembrane ligand for Eph receptors, a family of receptor tyrosine kinases which are crucial for migration, repulsion and adhesion during neuronal, vascular and epithelial development. Binds promiscuously Eph receptors residing on adjacent cells, leading to contact-dependent bidirectional signaling into neighboring cells. The signaling pathway downstream of the receptor is referred to as forward signaling while the signaling pathway downstream of the ephrin ligand is referred to as reverse signaling. May have a role in the developing mesenchymal and nervous tissue. The protein is Ephrin-B1 (efnb1) of Xenopus laevis (African clawed frog).